A 575-amino-acid chain; its full sequence is V-type ATP synthase alpha chain (575 aa).

238–245 (GPFGAGKT) is a binding site for ATP.

This sequence belongs to the ATPase alpha/beta chains family.

The catalysed reaction is ATP + H2O + 4 H(+)(in) = ADP + phosphate + 5 H(+)(out). Functionally, produces ATP from ADP in the presence of a proton gradient across the membrane. The V-type alpha chain is a catalytic subunit. In Borreliella burgdorferi (strain ATCC 35210 / DSM 4680 / CIP 102532 / B31) (Borrelia burgdorferi), this protein is V-type ATP synthase alpha chain (atpA).